Here is a 66-residue protein sequence, read N- to C-terminus: Large ribosomal subunit protein bL35 (66 aa).

The span at 1-26 (MPKMKTHRGSAKRFKKTGSGKLKRSH) shows a compositional bias: basic residues. The tract at residues 1-45 (MPKMKTHRGSAKRFKKTGSGKLKRSHAYTSHLFANKSQKQKRKLR) is disordered.

Belongs to the bacterial ribosomal protein bL35 family.

In Bacillus velezensis (strain DSM 23117 / BGSC 10A6 / LMG 26770 / FZB42) (Bacillus amyloliquefaciens subsp. plantarum), this protein is Large ribosomal subunit protein bL35.